A 347-amino-acid polypeptide reads, in one-letter code: Probable replication factor C subunit 5 (347 aa).

64–71 lines the ATP pocket; the sequence is GPPGTGKT.

This sequence belongs to the activator 1 small subunits family. As to quaternary structure, heteropentamer of various rfc subunits that forms a complex (RFC) with PCNA in the presence of ATP.

The protein resides in the nucleus. The elongation of primed DNA templates by DNA polymerase delta and epsilon requires the action of the accessory proteins PCNA and activator 1. In Dictyostelium discoideum (Social amoeba), this protein is Probable replication factor C subunit 5 (rfc5).